The primary structure comprises 672 residues: Putative sodium/calcium exchanger 7 (672 aa).

An N-terminal signal peptide occupies residues 1–23; that stretch reads MAQPSILFSLTLIFLISIKSCDA. A run of 12 helical transmembrane segments spans residues 88–108, 130–150, 164–184, 196–216, 221–241, 451–471, 479–499, 522–542, 551–571, 581–601, 620–640, and 649–669; these read VILIIVGVIYMLVLFIMVSSA, VAGVTFMAFGNGAPDVFGSIA, LGELFGGGLFVTTMVVSTIIL, IRDLLFYLVALSFLAFCFVFY, LWMPLTFLGLYLLYVITVIGA, LTLLHAFTCPAFLLFSIQFFL, PGLWVYGLAVSIVLAILIMVF, IAWIYLISSEVVNVVTMLGVV, GLTILAWSNSIGDLIADVSVV, AAAIGGPLFNLLMGFGLPFTI, LILFLAISLLATLIGIPVQKF, and VLISIYIAFIVFVILSETGVL.

The protein belongs to the Ca(2+):cation antiporter (CaCA) (TC 2.A.19) family.

It localises to the membrane. In Caenorhabditis elegans, this protein is Putative sodium/calcium exchanger 7 (ncx-7).